The chain runs to 553 residues: Probable glucomannan 4-beta-mannosyltransferase 1 (553 aa).

A helical membrane pass occupies residues 64 to 84 (LLPVFKGLVVMCLVLSIIVFF). Residue Asp163 is part of the active site. Substrate contacts are provided by Asp222 and Asp224. Residue Asp316 is part of the active site. Transmembrane regions (helical) follow at residues 395–415 (VAVH…SVFF), 431–451 (LISI…IFWV), 510–530 (EVMV…YGHT), and 531–551 (WLHF…FGFV).

Belongs to the glycosyltransferase 2 family. Plant cellulose synthase-like A subfamily.

It is found in the golgi apparatus membrane. The enzyme catalyses GDP-mannose + (glucomannan)n = GDP + (glucomannan)n+1.. Functionally, probable mannan synthase which consists of a 4-beta-mannosyltransferase activity on mannan using GDP-mannose. The beta-1,4-mannan product is the backbone for galactomannan synthesis by galactomannan galactosyltransferase. Galactomannan is a noncellulosic polysaccharides of plant cell wall. This is Probable glucomannan 4-beta-mannosyltransferase 1 from Arabidopsis thaliana (Mouse-ear cress).